Reading from the N-terminus, the 159-residue chain is Large ribosomal subunit protein uL22 (159 aa).

It belongs to the universal ribosomal protein uL22 family. In terms of assembly, part of the 50S ribosomal subunit.

Functionally, this protein binds specifically to 23S rRNA. It makes multiple contacts with different domains of the 23S rRNA in the assembled 50S subunit and ribosome. In terms of biological role, the globular domain of the protein is located near the polypeptide exit tunnel on the outside of the subunit, while an extended beta-hairpin is found that lines the wall of the exit tunnel in the center of the 70S ribosome. The chain is Large ribosomal subunit protein uL22 from Ignicoccus hospitalis (strain KIN4/I / DSM 18386 / JCM 14125).